The sequence spans 82 residues: MEIPKLLYIAVIAIGLSGSLTCATPLANPLADPEAEAEAKATAEATAEAIAEALAEPEPGLPILALFVTIPFIHHYLMEKLG.

Positions 1–23 are cleaved as a signal peptide; it reads MEIPKLLYIAVIAIGLSGSLTCA. The propeptide occupies 24-59; sequence TPLANPLADPEAEAEAKATAEATAEAIAEALAEPEP. Position 81 is a leucine amide (Leu-81).

It belongs to the formicidae venom clade 1 family. Expressed by the venom gland.

Its subcellular location is the secreted. Its function is as follows. Toxin that causes a slowly developing temporary paralysis when intrathoracically injected into insects (blowflies). Does not cause spontaneous nocifensive behaviors by intraplantar injection in mice. The protein is Myrmicitoxin(1)-Pm3a of Pogonomyrmex maricopa (Maricopa harvester ant).